Consider the following 139-residue polypeptide: Peptide methionine sulfoxide reductase MsrB (139 aa).

One can recognise a MsrB domain in the interval 8-130; sequence DREWQRELSP…NSASLQLKTQ (123 aa). 4 residues coordinate Zn(2+): C47, C50, C96, and C99. The Nucleophile role is filled by C119.

It belongs to the MsrB Met sulfoxide reductase family. Zn(2+) serves as cofactor.

It catalyses the reaction L-methionyl-[protein] + [thioredoxin]-disulfide + H2O = L-methionyl-(R)-S-oxide-[protein] + [thioredoxin]-dithiol. The protein is Peptide methionine sulfoxide reductase MsrB of Acinetobacter baumannii (strain SDF).